The primary structure comprises 139 residues: Putative nickel-responsive regulator (139 aa).

Ni(2+) contacts are provided by His79, His90, His92, and Cys98.

The protein belongs to the transcriptional regulatory CopG/NikR family. It depends on Ni(2+) as a cofactor.

Its function is as follows. Transcriptional regulator. This Geobacter sulfurreducens (strain ATCC 51573 / DSM 12127 / PCA) protein is Putative nickel-responsive regulator.